The chain runs to 828 residues: Calpain-A (828 aa).

Residues 1 to 14 (MDDLRGFLRQAGQE) enclose the EF-hand 1 domain. A Calpain catalytic domain is found at 88–387 (LFEDPLFPAS…FDRVEICNLS (300 aa)). Catalysis depends on residues Cys143, His299, and Asn327. Residues 388–557 (PDSLTEDQQN…TQNNMEENDD (170 aa)) are domain III. Positions 558 to 577 (HVGYGGKADTITPGFPTPKP) are linker. Positions 578-828 (IDPQKEGLRR…EEWIERTIYS (251 aa)) are domain IV. 4 consecutive EF-hand domains span residues 579–614 (DPQKEGLRRLFDSIAGKDMEVDWMELKRILDHSMRD), 699–734 (FSKDVCRSMVAMLDADKSGKLGFEEFETLLSEIAKW), 729–764 (SEIAKWKAIFKVYDVENTGRVSGFQLREALNSAGYH), and 764–799 (HLNNRVLNVLGHRYGSRDGKIAFDDFIMCAVKIKTY). Ca(2+) is bound by residues Asp712, Asp714, Ser716, Lys718, Glu723, Asp742, Thr746, Arg748, and Gln753.

It belongs to the peptidase C2 family. In terms of processing, undergoes calcium-dependent autolytic cleavage between Lys-54 and Asn-55, which is necessary for activation of the protein. In terms of tissue distribution, localized to the anterior and posterior embryonic poles just after fertilization. Becomes distributed around the polar buds and just below the pole cells of the posterior pole during cleavage cycles. During these nuclear divisions anterior localization disappears. Localized to actin caps that underlie the plasma membrane, immediately above each nucleus at cleavage cycles 8 and 9. Localized to a small set of nerve, midgut and blood cells in adults.

It localises to the cytoplasm. With respect to regulation, activated by millimolar concentrations of calcium, and by phosphatidylinositol 4,5-diphosphate, phosphatidylinositol 4-monophosphate, phosphatidylinositol and phosphatidic acid. Its function is as follows. Calcium-regulated non-lysosomal thiol-protease. Involved in the organization of the actin-related cytoskeleton during embryogenesis. This is Calpain-A (CalpA) from Drosophila melanogaster (Fruit fly).